We begin with the raw amino-acid sequence, 331 residues long: Barley B recombinant-like protein D (331 aa).

Positions 43-101 (ALMNDRDNAIRERDHALAEKKAAIAERDMAFTQRDAAMAERNAAVVERDNALAALELAR) form a coiled coil. The tract at residues 51-86 (AIRERDHALAEKKAAIAERDMAFTQRDAAMAERNAA) is alanine-zipper. The segment covering 104-122 (GLNMNNGNGFPQGSLSGSK) has biased composition (polar residues). Disordered regions lie at residues 104 to 140 (GLNMNNGNGFPQGSLSGSKNIHHHDQLSHAQSSPLQL) and 156 to 205 (AYPI…VGMS).

It belongs to the BBR/BPC family. Homodimer. Heterodimer.

It is found in the nucleus. Its function is as follows. Transcriptional regulator that specifically binds to GA-rich elements (GAGA-repeats) present in regulatory sequences of genes involved in developmental processes. The protein is Barley B recombinant-like protein D of Oryza sativa subsp. japonica (Rice).